The sequence spans 251 residues: Cell division protein ZapD (251 aa).

The protein belongs to the ZapD family. In terms of assembly, interacts with FtsZ.

It is found in the cytoplasm. Its function is as follows. Cell division factor that enhances FtsZ-ring assembly. Directly interacts with FtsZ and promotes bundling of FtsZ protofilaments, with a reduction in FtsZ GTPase activity. In Janthinobacterium sp. (strain Marseille) (Minibacterium massiliensis), this protein is Cell division protein ZapD.